Consider the following 199-residue polypeptide: Peptidyl-tRNA hydrolase (199 aa).

Y15 contacts tRNA. The active-site Proton acceptor is H20. TRNA-binding residues include Y66, N68, and N114.

Belongs to the PTH family. In terms of assembly, monomer.

It localises to the cytoplasm. The enzyme catalyses an N-acyl-L-alpha-aminoacyl-tRNA + H2O = an N-acyl-L-amino acid + a tRNA + H(+). Hydrolyzes ribosome-free peptidyl-tRNAs (with 1 or more amino acids incorporated), which drop off the ribosome during protein synthesis, or as a result of ribosome stalling. In terms of biological role, catalyzes the release of premature peptidyl moieties from peptidyl-tRNA molecules trapped in stalled 50S ribosomal subunits, and thus maintains levels of free tRNAs and 50S ribosomes. This is Peptidyl-tRNA hydrolase from Burkholderia cenocepacia (strain ATCC BAA-245 / DSM 16553 / LMG 16656 / NCTC 13227 / J2315 / CF5610) (Burkholderia cepacia (strain J2315)).